Consider the following 467-residue polypeptide: Ribulose bisphosphate carboxylase large chain (467 aa).

At Lys-5 the chain carries N6,N6,N6-trimethyllysine. The substrate site is built by Asn-114 and Thr-164. Lys-166 (proton acceptor) is an active-site residue. Lys-168 contacts substrate. Positions 192, 194, and 195 each coordinate Mg(2+). Position 192 is an N6-carboxylysine (Lys-192). His-285 serves as the catalytic Proton acceptor. Arg-286, His-318, and Ser-370 together coordinate substrate.

This sequence belongs to the RuBisCO large chain family. Type I subfamily. In terms of assembly, heterohexadecamer of 8 large chains and 8 small chains; disulfide-linked. The disulfide link is formed within the large subunit homodimers. Mg(2+) serves as cofactor. The disulfide bond which can form in the large chain dimeric partners within the hexadecamer appears to be associated with oxidative stress and protein turnover.

Its subcellular location is the plastid. It is found in the chloroplast. It carries out the reaction 2 (2R)-3-phosphoglycerate + 2 H(+) = D-ribulose 1,5-bisphosphate + CO2 + H2O. The catalysed reaction is D-ribulose 1,5-bisphosphate + O2 = 2-phosphoglycolate + (2R)-3-phosphoglycerate + 2 H(+). Its function is as follows. RuBisCO catalyzes two reactions: the carboxylation of D-ribulose 1,5-bisphosphate, the primary event in carbon dioxide fixation, as well as the oxidative fragmentation of the pentose substrate in the photorespiration process. Both reactions occur simultaneously and in competition at the same active site. The chain is Ribulose bisphosphate carboxylase large chain from Scutellaria bolanderi (Sierra skullcap).